Reading from the N-terminus, the 155-residue chain is Small ribosomal subunit protein uS7cz/uS7cy (155 aa).

Belongs to the universal ribosomal protein uS7 family. In terms of assembly, part of the 30S ribosomal subunit.

The protein localises to the plastid. The protein resides in the chloroplast. Its function is as follows. One of the primary rRNA binding proteins, it binds directly to 16S rRNA where it nucleates assembly of the head domain of the 30S subunit. The protein is Small ribosomal subunit protein uS7cz/uS7cy (rps7-A) of Eucalyptus globulus subsp. globulus (Tasmanian blue gum).